The primary structure comprises 256 residues: GTP cyclohydrolase FolE2 (256 aa).

The protein belongs to the GTP cyclohydrolase IV family.

It catalyses the reaction GTP + H2O = 7,8-dihydroneopterin 3'-triphosphate + formate + H(+). It functions in the pathway cofactor biosynthesis; 7,8-dihydroneopterin triphosphate biosynthesis; 7,8-dihydroneopterin triphosphate from GTP: step 1/1. In terms of biological role, converts GTP to 7,8-dihydroneopterin triphosphate. This chain is GTP cyclohydrolase FolE2, found in Caldicellulosiruptor saccharolyticus (strain ATCC 43494 / DSM 8903 / Tp8T 6331).